The sequence spans 117 residues: PBP1-interacting protein XAC1 (117 aa).

Residues 1–60 (MSKAPSQPAKKWMSARTLAKSEDATNRKSNTAAPASQPSQQPASVMHERPTPPPPAPVQL) form a disordered region. Over residues 32–44 (AAPASQPSQQPAS) the composition is skewed to low complexity.

In terms of assembly, forms a complex composed of at least MKT1, PBP1, XAC1 and LSM12. Forms a complex composed of at least MKT1L, PBP1, XAC1 and LSM12.

Its subcellular location is the cytoplasm. Involved in post-transcriptional regulation of gene expression. This chain is PBP1-interacting protein XAC1, found in Trypanosoma brucei brucei (strain 927/4 GUTat10.1).